We begin with the raw amino-acid sequence, 20 residues long: Protease inhibitor (20 aa).

Monomer. Glycosylated. Stored in epidermis and secreted into the hemolymph and cuticle. Not detected in the interior of the epidermis, fat body cells or columnar or goblet cells of the midgut epithelium (at protein level).

Inhibits trypsin and chymotrypsin. The sequence is that of Protease inhibitor from Antheraea mylitta (Tasar silkworm).